We begin with the raw amino-acid sequence, 520 residues long: Type I restriction enzyme EcoprrI methylase subunit (520 aa).

S-adenosyl-L-methionine is bound by residues 198–203 (EFFTPQ), 230–232 (SGS), and Glu-254.

It belongs to the N(4)/N(6)-methyltransferase family. As to quaternary structure, the type I restriction/modification system is composed of three polypeptides R, M and S; the restriction enzyme has stoichiometry R(2)M(2)S(1) while the methyltransferase is M(2)S(1).

The catalysed reaction is a 2'-deoxyadenosine in DNA + S-adenosyl-L-methionine = an N(6)-methyl-2'-deoxyadenosine in DNA + S-adenosyl-L-homocysteine + H(+). Functionally, the subtype gamma methyltransferase (M) subunit of a type I restriction enzyme. The M and S subunits together form a methyltransferase (MTase) that methylates two adenine residues of the sequence 5'-CCAN(7)ATGC-3'. In the presence of the R subunit the complex can also act as an endonuclease, binding to the same target sequence but cutting the DNA some distance from this site. Whether the DNA is cut or modified depends on the methylation state of the target sequence. When the target site is unmodified, the DNA is cut. When the target site is hemimethylated, the complex acts as a maintenance MTase modifying the DNA so that both strands become methylated. After locating a non-methylated recognition site, the enzyme complex serves as a molecular motor that translocates DNA in an ATP-dependent manner until a collision occurs that triggers cleavage. In Escherichia coli, this protein is Type I restriction enzyme EcoprrI methylase subunit.